The sequence spans 294 residues: Nucleotide-binding protein Dtur_1129 (294 aa).

Position 10 to 17 (10 to 17) interacts with ATP; it reads GLSGAGKS. Residue 61 to 64 participates in GTP binding; that stretch reads DIRT.

Belongs to the RapZ-like family.

In terms of biological role, displays ATPase and GTPase activities. The protein is Nucleotide-binding protein Dtur_1129 of Dictyoglomus turgidum (strain DSM 6724 / Z-1310).